Reading from the N-terminus, the 260-residue chain is Chlorocatechol 1,2-dioxygenase (260 aa).

Fe cation-binding residues include tyrosine 130, tyrosine 164, histidine 188, and histidine 190.

It belongs to the intradiol ring-cleavage dioxygenase family. It depends on Fe(3+) as a cofactor.

The catalysed reaction is 3-chlorocatechol + O2 = (2E,4Z)-2-chloromuconate + 2 H(+). The enzyme catalyses 3,5-dichlorocatechol + O2 = (2E,4E)-2,4-dichloromuconate + 2 H(+). It participates in aromatic compound metabolism; 3-chlorocatechol degradation. Preferentially converts 3-chlorocatechol and 3,5-dichlorocatechol as opposed to other chlorinated catechols. Retains diminished activity toward non-chlorinated substrates. The sequence is that of Chlorocatechol 1,2-dioxygenase (clcA) from Pseudomonas putida (Arthrobacter siderocapsulatus).